We begin with the raw amino-acid sequence, 1028 residues long: Unconventional myosin-Ic-A (1028 aa).

Met-1 is modified (N-acetylmethionine). In terms of domain architecture, Myosin motor spans 12–696; the sequence is GVQDFVLLEN…TLFATEDALE (685 aa). 105 to 112 serves as a coordination point for ATP; the sequence is GESGSGKT. An N6-methyllysine modification is found at Lys-348. The segment at 573–595 is actin-binding; the sequence is LSKLMEILMSKEPSYVRCIKPND. 2 IQ domains span residues 699 to 728 and 722 to 751; these read KQGI…SAIN and MKHS…AVDV. Residues 850–1024 form the TH1 domain; that stretch reads KDNYPQSVPR…NGHLSVVAPR (175 aa).

The protein belongs to the TRAFAC class myosin-kinesin ATPase superfamily. Myosin family. Interacts (via its IQ motifs) with calmodulin.

The protein localises to the cytoplasm. Its subcellular location is the cell membrane. It localises to the cell projection. The protein resides in the stereocilium membrane. Its function is as follows. Myosins are actin-based motor molecules with ATPase activity. Unconventional myosins serve in intracellular movements. Their highly divergent tails are presumed to bind to membranous compartments, which would be moved relative to actin filaments. Involved in egg activation by coupling dynamic actin to membrane. This Xenopus laevis (African clawed frog) protein is Unconventional myosin-Ic-A (myo1c-a).